The sequence spans 938 residues: Myocardin (938 aa).

An MEF2C-binding motif is present at residues 12–27 (IRRKFRSVLQLRLQQR). 3 RPEL repeats span residues 18-43 (SVLQ…PPLK), 62-87 (DSLR…QAST), and 106-131 (DDLN…PMDS). The segment at 37-64 (GLIPPLKSPTEFHDPRKKLDSAKTEDSL) is disordered. Residues 46 to 64 (TEFHDPRKKLDSAKTEDSL) are compositionally biased toward basic and acidic residues. The segment at 153 to 205 (FEDDSSRDGLSPDQARSEDPQGSGGSTPDIKSTEAPLAGPLDTIQDLTPGSES) is HDAC5-binding. Disordered stretches follow at residues 155-282 (DDSS…PPPM) and 339-381 (NEQM…PLPP). The span at 210-221 (TASQLSNQSDSG) shows a compositional bias: polar residues. Residues 248–265 (NRHKKPKDPKPKVKKLKY) are compositionally biased toward basic residues. A compositionally biased stretch (low complexity) spans 345 to 360 (NPNSSSTPLNNTPLSP). The span at 361 to 372 (VKNSLSGQTGVS) shows a compositional bias: polar residues. The 35-residue stretch at 383 to 417 (LDDLKVSELRQQLRIRGLPVSGTKTALVDRLRPFQ) folds into the SAP domain. 4 positions are modified to phosphoserine; by GSK3-beta: serine 457, serine 461, serine 465, and serine 469. The interval 501-521 (ESLLSSLNGGSGPSEPDGLDS) is disordered. Residues 522–566 (EKDKMLVEKQKVINQLTWKLRQEQRQVEELRMQLQKQKSGCNDQK) are a coiled coil. Residues 586-606 (AAQQASGKGQGHSSDSPPPAC) form a disordered region. Over residues 588–600 (QQASGKGQGHSSD) the composition is skewed to polar residues. Phosphoserine; by GSK3-beta occurs at positions 627, 631, 635, and 639. Polar residues-rich tracts occupy residues 667–694 (GAQR…QSSD) and 701–713 (SIPS…SSPT). Positions 667-734 (GAQRENHGVS…DAVKQQMTRS (68 aa)) are disordered. The required for interaction with and ubiquitination by STUB1 stretch occupies residues 717-938 (ITQPPSYEDA…SPMDLHLQQW (222 aa)). A phosphoserine; by MAPK1 and MAPK3 mark is found at serine 815, serine 862, and serine 869. Residue threonine 896 is modified to Phosphothreonine; by MAPK1 and MAPK3.

Homodimer. Interacts with MLLT7/FOXO4. Interacts with SRF, its association does not depend on specific DNA sequences for ternary complex formation. Interacts (via C-terminal) with EP300 (via the CREB-binding domain). Interacts with HDAC4 and HDAC5. Interacts with MEF2C. Interacts (via C-terminus) with STUB1/CHIP. Interacts with PURB. Post-translationally, ubiquitinated; by STUB1/CHIP at the C-terminus, leading to its degradation by the proteasome. Phosphorylation by GSK3B is required for STUB1/CHIP-mediated ubiquitination. Phosphorylation negatively regulates transcriptional activity. Phosphorylated; by GSK3B. In terms of tissue distribution, abundantly expressed in the heart, aorta media and bladder, weakly expressed in the stomach, intestine and lung.

The protein localises to the nucleus. In terms of biological role, smooth muscle cells (SM) and cardiac muscle cells-specific transcriptional factor which uses the canonical single or multiple CArG boxes DNA sequence. Acts as a cofactor of serum response factor (SRF) with the potential to modulate SRF-target genes. Plays a crucial role in cardiogenesis, urinary bladder development, and differentiation of the smooth muscle cell lineage (myogenesis). Positively regulates the transcription of genes involved in vascular smooth muscle contraction. This chain is Myocardin (Myocd), found in Rattus norvegicus (Rat).